A 492-amino-acid polypeptide reads, in one-letter code: MLLLGLLLLTALAGARLLWNKWKYRSLHLPPLAPGFLHLLQPDLPIYLLGLTQKLGPVYRLRLGLQDVVVLNSKRTIEEAMIRRWVDFAGRPQMPSYKLVSQPYQDLSLGDYSLLWKAHKKLTRSALLLGIRNSMEPLVEQLTQEFCERMRAQAGTPVAIQKEFSFLTCSVICCLTFGDKEDTLVHAFHDCVQDLMKSWEHWSIQVLDIVPFLRFFPNPGLQRLKQALENRDRIVEKQLRQHKDSMVAGQWRDMTDYMLQGMGKPRAEKGHGRLLEGHVHMSVVDLFIGGTETTATTLSWAVAFLLHHPEIQQRLQEELDCELGPGASGSRVPLKDPSRLPLLTATIAEVLRLRPVVPLALPHRTTRHSSILGYDIPEGTVVIPNLQGAHLDDTVWEQPHEFRPDRFLVPGASPRVLAFGCGARVCLGEPLARLELFVVLARLLHAFTLLPPTGPLPSLRPRSHCGINLTMQPFQVQLQPRGAVAPGPSQHQ.

Heme b is bound by residues Arg91 and Lys120. Position 231 (Arg231) interacts with 17alpha-hydroxyprogesterone. Arg231 contributes to the progesterone binding site. 3 residues coordinate heme b: His363, Arg424, and Cys426.

The protein belongs to the cytochrome P450 family. Requires heme b as cofactor.

Its subcellular location is the endoplasmic reticulum membrane. It localises to the microsome membrane. It catalyses the reaction 17alpha-hydroxyprogesterone + reduced [NADPH--hemoprotein reductase] + O2 = 11-deoxycortisol + oxidized [NADPH--hemoprotein reductase] + H2O + H(+). It carries out the reaction progesterone + reduced [NADPH--hemoprotein reductase] + O2 = 21-hydroxyprogesterone + oxidized [NADPH--hemoprotein reductase] + H2O + H(+). Specifically catalyzes the 21-hydroxylation of steroids. Required for the adrenal synthesis of mineralocorticoids and glucocorticoids. This chain is Steroid 21-hydroxylase (CYP21), found in Lynx lynx (Eurasian lynx).